A 66-amino-acid chain; its full sequence is UPF0337 protein RPA4217 (66 aa).

Belongs to the UPF0337 (CsbD) family.

The sequence is that of UPF0337 protein RPA4217 from Rhodopseudomonas palustris (strain ATCC BAA-98 / CGA009).